A 448-amino-acid chain; its full sequence is Binary larvicide subunit BinB (448 aa).

Residues 19–200 are beta-trefoil domain; that stretch reads TNYPLNTTPT…FVNSSFYAAA (182 aa). Cysteines 67 and 161 form a disulfide. The tract at residues 226-407 is probable pore-forming domain; sequence PKDAVRAVKG…APITNPLTLT (182 aa).

The protein belongs to the toxin_10 family. In terms of assembly, forms a heterodimer with BinA. Post-translationally, processed by proteases extracted from mosquito larval gut.

The protein localises to the spore. It is found in the perispore. Component of a binary toxin active against Culex and some Aedes mosquito larvae. This subunit is responsible for localized binding to specific regions of the host larval gut. The individual subunits are not toxic. BinAB and this subunit alone bind to the gastric caecum and posterior midgut of C.quinquefasciatus larvae. Binary toxin internalization into host gut cells requires both proteins. Does not bind to the midgut of Aedes aegypti. Toxic to Aedes atropalpus mosquito larvae; mortality towards both C.quinquefasciatus and A.atropalpus is maximal by 48 hours. A.aegypti is not very susceptible to this toxin. Binding component of binary toxin. The 51 kDa polypeptide acts synergetically with the 42 kDa polypeptide for expression of a larvicidal toxin. This Lysinibacillus sphaericus (Bacillus sphaericus) protein is Binary larvicide subunit BinB.